Here is a 1369-residue protein sequence, read N- to C-terminus: DNA-directed RNA polymerase subunit beta' (1369 aa).

The tract at residues 1-43 (MTSSSPKTRKSSTKSKAKRGSKSKKAAEIKAVQRLSKTPPPFR) is disordered. The segment covering 7 to 24 (KTRKSSTKSKAKRGSKSK) has biased composition (basic residues). Residues Cys253, Cys320, Cys327, and Cys330 each contribute to the Zn(2+) site. The segment at 1294–1369 (TVDMPSSPVA…LQEEGLLSDE (76 aa)) is disordered. Residues 1342–1351 (DDELSAEDQM) show a composition bias toward acidic residues. Low complexity predominate over residues 1357–1369 (LEGLQEEGLLSDE).

This sequence belongs to the RNA polymerase beta' chain family. RpoC2 subfamily. In cyanobacteria the RNAP catalytic core is composed of 2 alpha, 1 beta, 1 beta', 1 gamma and 1 omega subunit. When a sigma factor is associated with the core the holoenzyme is formed, which can initiate transcription. It depends on Zn(2+) as a cofactor.

It carries out the reaction RNA(n) + a ribonucleoside 5'-triphosphate = RNA(n+1) + diphosphate. DNA-dependent RNA polymerase catalyzes the transcription of DNA into RNA using the four ribonucleoside triphosphates as substrates. The protein is DNA-directed RNA polymerase subunit beta' of Prochlorococcus marinus (strain NATL1A).